A 204-amino-acid polypeptide reads, in one-letter code: Allatotropin (204 aa).

The first 20 residues, 1-20 (MNLTMQLAVIVAVCLCLAEG), serve as a signal peptide directing secretion. The propeptide occupies 21–35 (APDVRLTRTKQQRPT). Positions 47–83 (RGFGKRDRPHPRAERDVDHQAPSARPNRGTPTFKSPT) are disordered. At Phe-49 the chain carries Phenylalanine amide. The segment covering 50–65 (GKRDRPHPRAERDVDH) has biased composition (basic and acidic residues). A propeptide spanning residues 53–204 (DRPHPRAERD…LSSEELLRNF (152 aa)) is cleaved from the precursor.

Expressed extensively in the brain, frontal ganglion and terminal ganglion of the day 2 fifth instar larva (at protein level). Not expressed in the larval brain after day 4 of the fifth instar, or in the brain of the pupa or adult. Expression in the terminal ganglion is localized to cells in the posterior portion of the seventh neuromere of day 2 fifth instar larvae. In the pupa and adult expression is detected in the medial region of neuromere 6, the dorsal medial region of neuromere 7, and the posterior neuromere of the terminal ganglion (at protein level). In the frontal ganglion expression decreases in the wandering larvae and is present at low levels in during pupal ecdysis, but is not detected in the adult. Expressed in the subesophageal ganglion of day 2 fifth instar larva, but not at any time before or after day 2. Not expressed in the abdominal ganglia 1-6 of the day 2 fifth instar larva (at protein level). Expressed in the anterior neuromeres of the pterothoracic ganglion in pupa but not in adult (at protein level). Expressed in the unfused abdominal ganglia of day 10 pupae, and in pharate adult is expressed in median neurosecretory cells M1, M2 and M5, but not in median neurosecretory cells M3 and M4 (at protein level). Not expressed in the differentiated median neurosecretory cells M5 of the larva (at protein level). In the pharate adult brain isoform 3 is the predominant form, with lower levels of isoform 2 and very low levels of isoform 1 detected. In the pharate adult nerve cord isoform 3 is the predominant form, with lower levels of isoform 2 and no isoform 1 detected. In the pharate adult frontal ganglion isoform 3 is expressed, but not isoform 1 and isoform 2.

It is found in the secreted. Neuropeptide stimulator of juvenile hormone synthesis. Cardioregulatory neurohormone that increases heart beat rate in the adult but not in the larva. Inhibits active ion transport in the midgut of feeding fourth instar and day 2 fifth instar larva, but not in the midgut of pharate or wandering fifth instar larva. This is Allatotropin from Manduca sexta (Tobacco hawkmoth).